Consider the following 572-residue polypeptide: Methionine--tRNA ligase (572 aa).

The short motif at 11 to 21 (PYINGIKHLGN) is the 'HIGH' region element. Zn(2+) is bound by residues cysteine 143, cysteine 146, cysteine 156, and cysteine 159. The 'KMSKS' region motif lies at 346–350 (QFSTS). Threonine 349 lines the ATP pocket.

This sequence belongs to the class-I aminoacyl-tRNA synthetase family. MetG type 1 subfamily. In terms of assembly, monomer. Requires Zn(2+) as cofactor.

The protein resides in the cytoplasm. The enzyme catalyses tRNA(Met) + L-methionine + ATP = L-methionyl-tRNA(Met) + AMP + diphosphate. Is required not only for elongation of protein synthesis but also for the initiation of all mRNA translation through initiator tRNA(fMet) aminoacylation. This is Methionine--tRNA ligase from Cereibacter sphaeroides (strain KD131 / KCTC 12085) (Rhodobacter sphaeroides).